The chain runs to 220 residues: Deoxyribose-phosphate aldolase (220 aa).

Catalysis depends on aspartate 89, which acts as the Proton donor/acceptor. Catalysis depends on lysine 151, which acts as the Schiff-base intermediate with acetaldehyde. The active-site Proton donor/acceptor is the lysine 180.

The protein belongs to the DeoC/FbaB aldolase family. DeoC type 1 subfamily.

The protein localises to the cytoplasm. The enzyme catalyses 2-deoxy-D-ribose 5-phosphate = D-glyceraldehyde 3-phosphate + acetaldehyde. It participates in carbohydrate degradation; 2-deoxy-D-ribose 1-phosphate degradation; D-glyceraldehyde 3-phosphate and acetaldehyde from 2-deoxy-alpha-D-ribose 1-phosphate: step 2/2. Its function is as follows. Catalyzes a reversible aldol reaction between acetaldehyde and D-glyceraldehyde 3-phosphate to generate 2-deoxy-D-ribose 5-phosphate. This is Deoxyribose-phosphate aldolase from Streptococcus pneumoniae serotype 4 (strain ATCC BAA-334 / TIGR4).